A 310-amino-acid polypeptide reads, in one-letter code: MSALSLENITGVYAPSALLVVGTFILKKEWVPFAVALAAGFVAWKLSVGGSSKPRKVLNPNEFQNFVLKEKNDISHNVTIYRFALPRPTDILGLPIGQHISLAATIEGQPKEVVRSYTPISSDNEAGYFDLLVKAYPQGNISKYLTTLKVGDTMKVRGPKGAMVYTPNMCRHIGMIAGGTGITPMLQIIKAIIRNRPRNGGNDTTQVDLIFANVNPDDILLKDELEKLAAEDDGFRIYYVLNNPPEGWTGGVGFVTPDMIKERLPAPASDIKILLCGPPPMVSAMKKATESLGYTKARPVSKLEDQVFCF.

A helical transmembrane segment spans residues 30 to 50 (WVPFAVALAAGFVAWKLSVGG). Positions 61-166 (NEFQNFVLKE…RGPKGAMVYT (106 aa)) constitute an FAD-binding FR-type domain. Residues 146-160 (TTLK…RGPK) and 172-209 (HIGM…QVDL) contribute to the FAD site.

The protein belongs to the flavoprotein pyridine nucleotide cytochrome reductase family. Monomer. Component of the 2-(3-amino-3-carboxypropyl)histidine synthase complex composed of dph1, dph2, dph3 and a NADH-dependent reductase, predominantly cbr1. Requires FAD as cofactor.

It is found in the mitochondrion outer membrane. It carries out the reaction 2 Fe(III)-[cytochrome b5] + NADH = 2 Fe(II)-[cytochrome b5] + NAD(+) + H(+). The enzyme catalyses 2 Fe(3+)-[Dph3] + NADH = 2 Fe(2+)-[Dph3] + NAD(+) + H(+). Its pathway is protein modification; peptidyl-diphthamide biosynthesis. Functionally, NADH-dependent reductase for dph3 and cytochrome b5. Required for the first step of diphthamide biosynthesis, a post-translational modification of histidine which occurs in elongation factor 2. Dph1 and dph2 transfer a 3-amino-3-carboxypropyl (ACP) group from S-adenosyl-L-methionine (SAM) to a histidine residue, the reaction is assisted by a reduction system comprising dph3 and a NADH-dependent reductase, predominantly cbr1. By reducing dph3, also involved in the formation of the tRNA wobble base modification mcm5s 2U (5-methoxycarbonylmethyl-2-thiouridine), mediated by the elongator complex. The cytochrome b5/NADH cytochrome b5 reductase electron transfer system supports the catalytic activity of several sterol biosynthetic enzymes. In Emericella nidulans (strain FGSC A4 / ATCC 38163 / CBS 112.46 / NRRL 194 / M139) (Aspergillus nidulans), this protein is NADH-cytochrome b5 reductase 1 (cbr1).